Reading from the N-terminus, the 723-residue chain is Probable cadmium-transporting ATPase (723 aa).

Residues 12 to 75 enclose the HMA domain; that stretch reads EMKAYRVQGF…AGAFENLKVT (64 aa). Cd(2+) is bound by residues Cys-23 and Cys-26. 5 helical membrane-spanning segments follow: residues 103–123, 127–147, 168–188, 329–349, and 361–381; these read STLL…YVNG, IVTT…LFKV, IGGA…LFAI, YYTP…PLFF, and LAVL…ISIV. Asp-412 acts as the 4-aspartylphosphate intermediate in catalysis. The next 2 helical transmembrane spans lie at 671–690 and 694–716; these read IIKA…LLLV and WLTL…LNGL.

The protein belongs to the cation transport ATPase (P-type) (TC 3.A.3) family. Type IB subfamily.

The protein localises to the cell membrane. The enzyme catalyses Cd(2+)(in) + ATP + H2O = Cd(2+)(out) + ADP + phosphate + H(+). Functionally, couples the hydrolysis of ATP with the export of cadmium. The chain is Probable cadmium-transporting ATPase (cadA) from Alkalihalophilus pseudofirmus (strain ATCC BAA-2126 / JCM 17055 / OF4) (Bacillus pseudofirmus).